We begin with the raw amino-acid sequence, 60 residues long: MAVQQNKKSRSRKGMRRSHDRVAIPAVIYCSCGEPTVPHCVCPSCGTYKGRQVVAKSDNE.

Belongs to the bacterial ribosomal protein bL32 family.

The chain is Large ribosomal subunit protein bL32 from Desulfovibrio desulfuricans (strain ATCC 27774 / DSM 6949 / MB).